The chain runs to 149 residues: 5-hydroxytryptamine receptor 1E (149 aa).

Over 1 to 6 the chain is Extracellular; that stretch reads HQPANY. A helical membrane pass occupies residues 7-31; sequence LICSLAVTDLLVAVLVMPLSIMYIV. Topologically, residues 32-39 are cytoplasmic; it reads MDSWRLGY. A helical transmembrane segment spans residues 40-65; it reads FICEVWLSVDMTCCTCSILHLCVIAL. A disulfide bridge connects residues Cys-42 and Cys-120. Serotonin-binding residues include Asp-49 and Cys-53. The DRY motif; important for ligand-induced conformation changes motif lies at 66 to 68; sequence DRY. The Extracellular segment spans residues 66–85; the sequence is DRYWAITNAIEYARKRTAKR. A helical membrane pass occupies residues 86–104; it reads AGLMILTVWTISIFISMPP. Over 105–149 the chain is Cytoplasmic; that stretch reads LFWRSHRQLSPPPSQCAIQHDHVIYTIYSTLGAFYIPLTLILILY.

This sequence belongs to the G-protein coupled receptor 1 family.

It is found in the cell membrane. G-protein coupled receptor for 5-hydroxytryptamine (serotonin). Also functions as a receptor for various alkaloids and psychoactive substances. Ligand binding causes a conformation change that triggers signaling via guanine nucleotide-binding proteins (G proteins) and modulates the activity of downstream effectors, such as adenylate cyclase. HTR1E is coupled to G(i)/G(o) G alpha proteins and mediates inhibitory neurotransmission by inhibiting adenylate cyclase activity. This chain is 5-hydroxytryptamine receptor 1E (HTR1E), found in Sus scrofa (Pig).